A 682-amino-acid polypeptide reads, in one-letter code: DNA-directed RNA polymerase subunit beta' (682 aa).

Zn(2+)-binding residues include cysteine 69, cysteine 71, cysteine 87, and cysteine 90. Mg(2+) contacts are provided by aspartate 489, aspartate 491, and aspartate 493.

Belongs to the RNA polymerase beta' chain family. RpoC1 subfamily. In plastids the minimal PEP RNA polymerase catalytic core is composed of four subunits: alpha, beta, beta', and beta''. When a (nuclear-encoded) sigma factor is associated with the core the holoenzyme is formed, which can initiate transcription. It depends on Mg(2+) as a cofactor. Zn(2+) serves as cofactor.

Its subcellular location is the plastid. It is found in the chloroplast. It catalyses the reaction RNA(n) + a ribonucleoside 5'-triphosphate = RNA(n+1) + diphosphate. In terms of biological role, DNA-dependent RNA polymerase catalyzes the transcription of DNA into RNA using the four ribonucleoside triphosphates as substrates. This Agrostis stolonifera (Creeping bentgrass) protein is DNA-directed RNA polymerase subunit beta'.